The chain runs to 54 residues: Large ribosomal subunit protein bL33 (54 aa).

Belongs to the bacterial ribosomal protein bL33 family.

In Corynebacterium diphtheriae (strain ATCC 700971 / NCTC 13129 / Biotype gravis), this protein is Large ribosomal subunit protein bL33.